Reading from the N-terminus, the 224-residue chain is Ribose-5-phosphate isomerase A (224 aa).

Residues 34–37 (TGST), 87–90 (DGAD), and 100–103 (KGGG) contribute to the substrate site. Residue Glu-109 is the Proton acceptor of the active site. Lys-127 is a substrate binding site.

Belongs to the ribose 5-phosphate isomerase family. In terms of assembly, homodimer.

The catalysed reaction is aldehydo-D-ribose 5-phosphate = D-ribulose 5-phosphate. It functions in the pathway carbohydrate degradation; pentose phosphate pathway; D-ribose 5-phosphate from D-ribulose 5-phosphate (non-oxidative stage): step 1/1. Functionally, catalyzes the reversible conversion of ribose-5-phosphate to ribulose 5-phosphate. This is Ribose-5-phosphate isomerase A from Francisella tularensis subsp. novicida (strain U112).